A 185-amino-acid polypeptide reads, in one-letter code: Isopentenyl-diphosphate Delta-isomerase (185 aa).

Positions 27 and 34 each coordinate Mn(2+). Residues 32–168 (PLHLAFSCHL…PWAFSPWLTL (137 aa)) enclose the Nudix hydrolase domain. Residue cysteine 69 is part of the active site. Cysteine 69 provides a ligand contact to Mg(2+). A Mn(2+)-binding site is contributed by histidine 71. Glutamate 89 contacts Mg(2+). 2 residues coordinate Mn(2+): glutamate 118 and glutamate 120. Glutamate 120 is an active-site residue.

This sequence belongs to the IPP isomerase type 1 family. It depends on Mg(2+) as a cofactor. The cofactor is Mn(2+).

It is found in the cytoplasm. It catalyses the reaction isopentenyl diphosphate = dimethylallyl diphosphate. Its pathway is isoprenoid biosynthesis; dimethylallyl diphosphate biosynthesis; dimethylallyl diphosphate from isopentenyl diphosphate: step 1/1. Its function is as follows. Catalyzes the 1,3-allylic rearrangement of the homoallylic substrate isopentenyl (IPP) to its highly electrophilic allylic isomer, dimethylallyl diphosphate (DMAPP). This is Isopentenyl-diphosphate Delta-isomerase from Leifsonia xyli subsp. xyli (strain CTCB07).